A 91-amino-acid chain; its full sequence is DNA-directed RNA polymerase subunit omega (91 aa).

Belongs to the RNA polymerase subunit omega family. As to quaternary structure, the RNAP catalytic core consists of 2 alpha, 1 beta, 1 beta' and 1 omega subunit. When a sigma factor is associated with the core the holoenzyme is formed, which can initiate transcription.

It catalyses the reaction RNA(n) + a ribonucleoside 5'-triphosphate = RNA(n+1) + diphosphate. Functionally, promotes RNA polymerase assembly. Latches the N- and C-terminal regions of the beta' subunit thereby facilitating its interaction with the beta and alpha subunits. This Proteus mirabilis (strain HI4320) protein is DNA-directed RNA polymerase subunit omega.